The following is a 279-amino-acid chain: 3-methyl-2-oxobutanoate hydroxymethyltransferase (279 aa).

Mg(2+)-binding residues include Asp-44 and Asp-83. Residues Asp-44–Ser-45, Asp-83, and Lys-112 each bind 3-methyl-2-oxobutanoate. Residue Glu-114 participates in Mg(2+) binding. Glu-180 (proton acceptor) is an active-site residue.

The protein belongs to the PanB family. In terms of assembly, homodecamer; pentamer of dimers. Mg(2+) is required as a cofactor.

The protein resides in the cytoplasm. The enzyme catalyses 3-methyl-2-oxobutanoate + (6R)-5,10-methylene-5,6,7,8-tetrahydrofolate + H2O = 2-dehydropantoate + (6S)-5,6,7,8-tetrahydrofolate. Its pathway is cofactor biosynthesis; (R)-pantothenate biosynthesis; (R)-pantoate from 3-methyl-2-oxobutanoate: step 1/2. In terms of biological role, catalyzes the reversible reaction in which hydroxymethyl group from 5,10-methylenetetrahydrofolate is transferred onto alpha-ketoisovalerate to form ketopantoate. In Chloroflexus aggregans (strain MD-66 / DSM 9485), this protein is 3-methyl-2-oxobutanoate hydroxymethyltransferase.